A 184-amino-acid chain; its full sequence is ATP-dependent protease subunit HslV (184 aa).

The active site involves T12. Residues A167, C170, and T173 each coordinate Na(+).

It belongs to the peptidase T1B family. HslV subfamily. As to quaternary structure, a double ring-shaped homohexamer of HslV is capped on each side by a ring-shaped HslU homohexamer. The assembly of the HslU/HslV complex is dependent on binding of ATP.

The protein localises to the cytoplasm. It carries out the reaction ATP-dependent cleavage of peptide bonds with broad specificity.. Its activity is regulated as follows. Allosterically activated by HslU binding. Its function is as follows. Protease subunit of a proteasome-like degradation complex believed to be a general protein degrading machinery. This Wolbachia pipientis subsp. Culex pipiens (strain wPip) protein is ATP-dependent protease subunit HslV.